A 148-amino-acid polypeptide reads, in one-letter code: Basic leucine zipper 4 (148 aa).

In terms of domain architecture, bZIP spans 48-97 (DDKKRRRTISNRESAKRSRMKKKKRFEELTEEVNRLNIRNQELKNRLANV). The segment at 50–70 (KKRRRTISNRESAKRSRMKKK) is disordered. Positions 50–72 (KKRRRTISNRESAKRSRMKKKKR) are basic motif. The tract at residues 76 to 90 (LTEEVNRLNIRNQEL) is leucine-zipper.

The protein resides in the nucleus. Functionally, probable transcription factor involved in somatic embryogenesis. Acts as a positive regulator of BHLH109. The sequence is that of Basic leucine zipper 4 from Arabidopsis thaliana (Mouse-ear cress).